We begin with the raw amino-acid sequence, 216 residues long: Adenylate kinase (216 aa).

10–15 (GAGKGT) contributes to the ATP binding site. The segment at 30–59 (STGDIFRYNIKQGTELGKKAKSYMDQGLLV) is NMP. AMP-binding positions include T31, R36, 57-59 (LLV), 85-88 (GFPR), and Q92. An LID region spans residues 126–163 (GRRICRECGATFHVQYNPSTKGALCDQCGGELYQRDDD). R127 contributes to the ATP binding site. The Zn(2+) site is built by C130 and C133. An ATP-binding site is contributed by 136–137 (TF). Zn(2+) contacts are provided by C150 and C153. AMP-binding residues include R160 and R171. Residue K199 participates in ATP binding.

It belongs to the adenylate kinase family. As to quaternary structure, monomer.

The protein localises to the cytoplasm. The enzyme catalyses AMP + ATP = 2 ADP. It participates in purine metabolism; AMP biosynthesis via salvage pathway; AMP from ADP: step 1/1. Catalyzes the reversible transfer of the terminal phosphate group between ATP and AMP. Plays an important role in cellular energy homeostasis and in adenine nucleotide metabolism. The chain is Adenylate kinase from Alkaliphilus oremlandii (strain OhILAs) (Clostridium oremlandii (strain OhILAs)).